The following is a 147-amino-acid chain: 3-dehydroquinate dehydratase (147 aa).

Tyr-23 (proton acceptor) is an active-site residue. Asn-74, His-80, and Asp-87 together coordinate substrate. His-100 serves as the catalytic Proton donor. Substrate-binding positions include 101–102 (IS) and Arg-111.

This sequence belongs to the type-II 3-dehydroquinase family. As to quaternary structure, homododecamer.

The catalysed reaction is 3-dehydroquinate = 3-dehydroshikimate + H2O. It functions in the pathway metabolic intermediate biosynthesis; chorismate biosynthesis; chorismate from D-erythrose 4-phosphate and phosphoenolpyruvate: step 3/7. Catalyzes a trans-dehydration via an enolate intermediate. This chain is 3-dehydroquinate dehydratase, found in Prochlorococcus marinus (strain MIT 9215).